The chain runs to 294 residues: tRNA pseudouridine synthase B (294 aa).

The active-site Nucleophile is the aspartate 39.

The protein belongs to the pseudouridine synthase TruB family. Type 1 subfamily.

It carries out the reaction uridine(55) in tRNA = pseudouridine(55) in tRNA. Its function is as follows. Responsible for synthesis of pseudouridine from uracil-55 in the psi GC loop of transfer RNAs. This Streptococcus agalactiae serotype Ia (strain ATCC 27591 / A909 / CDC SS700) protein is tRNA pseudouridine synthase B.